A 144-amino-acid polypeptide reads, in one-letter code: High mobility group B protein 2 (144 aa).

Composition is skewed to basic and acidic residues over residues 1-12 (MKGAKSKTETRS) and 73-94 (AGDKWKSLSDSEKAPYVAKAEK). Disordered regions lie at residues 1–42 (MKGA…KRPA), 57–94 (KKENPKNKSVATVGKAAGDKWKSLSDSEKAPYVAKAEK), and 106–144 (YNKKLEEGPKEDEESDKSVSEVNDEDDAEDGSEEEEDDD). The HMG box DNA-binding region spans 38 to 107 (PKRPASAFFV…EYEKNIKAYN (70 aa)). A Phosphoserine modification is found at serine 125. A compositionally biased stretch (acidic residues) spans 127 to 144 (VNDEDDAEDGSEEEEDDD).

The protein belongs to the HMGB family. In terms of tissue distribution, mostly expressed in cotyledons, hypocotyls, leaves, and flowers (excluding pedicels), also present in roots and stems.

It localises to the nucleus. The protein localises to the cytoplasm. Its subcellular location is the cytosol. Binds preferentially double-stranded DNA. Confers sensitivity to salt and drought stresses. This is High mobility group B protein 2 (HMGB2) from Arabidopsis thaliana (Mouse-ear cress).